The following is a 504-amino-acid chain: Arabinose import ATP-binding protein AraG (504 aa).

2 ABC transporter domains span residues 8 to 243 (LSFR…MVGR) and 256 to 499 (YGEE…MPKV). 40-47 (GENGAGKS) lines the ATP pocket.

The protein belongs to the ABC transporter superfamily. Arabinose importer (TC 3.A.1.2.2) family. As to quaternary structure, the complex is composed of two ATP-binding proteins (AraG), two transmembrane proteins (AraH) and a solute-binding protein (AraF).

Its subcellular location is the cell inner membrane. It carries out the reaction L-arabinose(out) + ATP + H2O = L-arabinose(in) + ADP + phosphate + H(+). Part of the ABC transporter complex AraFGH involved in arabinose import. Responsible for energy coupling to the transport system. The chain is Arabinose import ATP-binding protein AraG from Shigella boydii serotype 4 (strain Sb227).